Consider the following 287-residue polypeptide: Acetyl-coenzyme A carboxylase carboxyl transferase subunit beta (287 aa).

A CoA carboxyltransferase N-terminal domain is found at 25-287 (VWTKCSACEQ…KMLNTHVIEE (263 aa)). Residues C29, C32, C48, and C51 each contribute to the Zn(2+) site. The C4-type zinc finger occupies 29–51 (CSACEQVLYRAELERNLEVCPKC).

It belongs to the AccD/PCCB family. In terms of assembly, acetyl-CoA carboxylase is a heterohexamer composed of biotin carboxyl carrier protein (AccB), biotin carboxylase (AccC) and two subunits each of ACCase subunit alpha (AccA) and ACCase subunit beta (AccD). It depends on Zn(2+) as a cofactor.

Its subcellular location is the cytoplasm. It catalyses the reaction N(6)-carboxybiotinyl-L-lysyl-[protein] + acetyl-CoA = N(6)-biotinyl-L-lysyl-[protein] + malonyl-CoA. Its pathway is lipid metabolism; malonyl-CoA biosynthesis; malonyl-CoA from acetyl-CoA: step 1/1. Its function is as follows. Component of the acetyl coenzyme A carboxylase (ACC) complex. Biotin carboxylase (BC) catalyzes the carboxylation of biotin on its carrier protein (BCCP) and then the CO(2) group is transferred by the transcarboxylase to acetyl-CoA to form malonyl-CoA. This Aeromonas hydrophila subsp. hydrophila (strain ATCC 7966 / DSM 30187 / BCRC 13018 / CCUG 14551 / JCM 1027 / KCTC 2358 / NCIMB 9240 / NCTC 8049) protein is Acetyl-coenzyme A carboxylase carboxyl transferase subunit beta.